The primary structure comprises 907 residues: Protein translocase subunit SecA (907 aa).

Residues Gln87, 105–109, and Asp512 contribute to the ATP site; that span reads GEGKT. The disordered stretch occupies residues 862–885; that stretch reads AENQLDDGHSSDQNHSPMVRDERK. The span at 867–885 shows a compositional bias: basic and acidic residues; that stretch reads DDGHSSDQNHSPMVRDERK. Residues Cys892, Cys894, Cys903, and His904 each coordinate Zn(2+).

The protein belongs to the SecA family. Monomer and homodimer. Part of the essential Sec protein translocation apparatus which comprises SecA, SecYEG and auxiliary proteins SecDF-YajC and YidC. It depends on Zn(2+) as a cofactor.

It is found in the cell inner membrane. The protein resides in the cytoplasm. The enzyme catalyses ATP + H2O + cellular proteinSide 1 = ADP + phosphate + cellular proteinSide 2.. Its function is as follows. Part of the Sec protein translocase complex. Interacts with the SecYEG preprotein conducting channel. Has a central role in coupling the hydrolysis of ATP to the transfer of proteins into and across the cell membrane, serving both as a receptor for the preprotein-SecB complex and as an ATP-driven molecular motor driving the stepwise translocation of polypeptide chains across the membrane. In Aliivibrio salmonicida (strain LFI1238) (Vibrio salmonicida (strain LFI1238)), this protein is Protein translocase subunit SecA.